A 246-amino-acid polypeptide reads, in one-letter code: D-erythrulose reductase (246 aa).

An NADP(+)-binding site is contributed by 13–41; it reads LVTGAGKGIGRAVAVALCKAGARVTALSR. Residue Ser138 participates in substrate binding. Tyr151 functions as the Proton acceptor in the catalytic mechanism. An NADP(+)-binding site is contributed by Lys155.

Belongs to the short-chain dehydrogenases/reductases (SDR) family. As to quaternary structure, homotetramer. Post-translationally, the N-terminus is blocked. Highly expressed in kidney, and also found in high amounts in liver and testis. Low expression seen in all other tissues tested.

It is found in the cytoplasm. The enzyme catalyses D-threitol + NADP(+) = D-erythrulose + NADPH + H(+). It carries out the reaction xylitol + NADP(+) = L-xylulose + NADPH + H(+). In terms of biological role, catalyzes the reduction of D-erythrulose to D-threitol with the concomitant oxidation of NAD(P)H to NAD(P)(+). NADH is less effective than NADPH. May also catalyze the reduction of L-xylulose. The polypeptide is D-erythrulose reductase (DER) (Gallus gallus (Chicken)).